A 209-amino-acid polypeptide reads, in one-letter code: Thiamine-phosphate synthase (209 aa).

4-amino-2-methyl-5-(diphosphooxymethyl)pyrimidine-binding positions include 36–40 (QLRDK) and N68. Mg(2+)-binding residues include D69 and D88. S107 is a binding site for 4-amino-2-methyl-5-(diphosphooxymethyl)pyrimidine. 133 to 135 (TNS) is a 2-[(2R,5Z)-2-carboxy-4-methylthiazol-5(2H)-ylidene]ethyl phosphate binding site. K136 serves as a coordination point for 4-amino-2-methyl-5-(diphosphooxymethyl)pyrimidine. Residues G164 and 184 to 185 (IT) each bind 2-[(2R,5Z)-2-carboxy-4-methylthiazol-5(2H)-ylidene]ethyl phosphate.

It belongs to the thiamine-phosphate synthase family. Mg(2+) serves as cofactor.

The catalysed reaction is 2-[(2R,5Z)-2-carboxy-4-methylthiazol-5(2H)-ylidene]ethyl phosphate + 4-amino-2-methyl-5-(diphosphooxymethyl)pyrimidine + 2 H(+) = thiamine phosphate + CO2 + diphosphate. It carries out the reaction 2-(2-carboxy-4-methylthiazol-5-yl)ethyl phosphate + 4-amino-2-methyl-5-(diphosphooxymethyl)pyrimidine + 2 H(+) = thiamine phosphate + CO2 + diphosphate. It catalyses the reaction 4-methyl-5-(2-phosphooxyethyl)-thiazole + 4-amino-2-methyl-5-(diphosphooxymethyl)pyrimidine + H(+) = thiamine phosphate + diphosphate. It participates in cofactor biosynthesis; thiamine diphosphate biosynthesis; thiamine phosphate from 4-amino-2-methyl-5-diphosphomethylpyrimidine and 4-methyl-5-(2-phosphoethyl)-thiazole: step 1/1. Its function is as follows. Condenses 4-methyl-5-(beta-hydroxyethyl)thiazole monophosphate (THZ-P) and 2-methyl-4-amino-5-hydroxymethyl pyrimidine pyrophosphate (HMP-PP) to form thiamine monophosphate (TMP). The polypeptide is Thiamine-phosphate synthase (Shouchella clausii (strain KSM-K16) (Alkalihalobacillus clausii)).